A 333-amino-acid chain; its full sequence is DNA primase small subunit PriS (333 aa).

Active-site residues include aspartate 96, aspartate 98, and aspartate 237.

The protein belongs to the eukaryotic-type primase small subunit family. Heterodimer of a small subunit (PriS) and a large subunit (PriL). It depends on Mg(2+) as a cofactor. The cofactor is Mn(2+).

Its function is as follows. Catalytic subunit of DNA primase, an RNA polymerase that catalyzes the synthesis of short RNA molecules used as primers for DNA polymerase during DNA replication. The small subunit contains the primase catalytic core and has DNA synthesis activity on its own. Binding to the large subunit stabilizes and modulates the activity, increasing the rate of DNA synthesis while decreasing the length of the DNA fragments, and conferring RNA synthesis capability. The DNA polymerase activity may enable DNA primase to also catalyze primer extension after primer synthesis. May also play a role in DNA repair. This is DNA primase small subunit PriS from Thermoplasma volcanium (strain ATCC 51530 / DSM 4299 / JCM 9571 / NBRC 15438 / GSS1).